Here is a 281-residue protein sequence, read N- to C-terminus: Probable endonuclease 4 (281 aa).

Residues H68, H108, E145, D179, H182, H216, D229, H231, and E261 each contribute to the Zn(2+) site.

The protein belongs to the AP endonuclease 2 family. The cofactor is Zn(2+).

It carries out the reaction Endonucleolytic cleavage to 5'-phosphooligonucleotide end-products.. Endonuclease IV plays a role in DNA repair. It cleaves phosphodiester bonds at apurinic or apyrimidinic (AP) sites, generating a 3'-hydroxyl group and a 5'-terminal sugar phosphate. The protein is Probable endonuclease 4 of Trichlorobacter lovleyi (strain ATCC BAA-1151 / DSM 17278 / SZ) (Geobacter lovleyi).